We begin with the raw amino-acid sequence, 422 residues long: MILVKDAIINGKKQDLLVEGNIIKKIGNISISEVSKDETEIIDGKNCVLIPGLVNTHTHVPMSLFRGVADDIPLMEWLSGHIWPMESKLNEKIVYAGTLLGTVEMIKSGTTAFNDMYFFLDSIIKAVDETGIRSTIAYGMIDLFDEEKREKELKTARKSLETIKNLNNSRITGALGPHAPYTCSKELLESTNTLAREYNVPIHIHMNETLDEINQVVEKTGMRPFEYLNSFGFFNDVNTICAHCVHLSDSEIQIMKEKNIFAAHNPVSNLKLASGVSPVLKLLENNVPVTLGTDGCGSNNNMNLFEEIKAAALIHKGVNLNPVAVTAKEAFEFATLNGAKALNINSGEIKEGKLADFVIINMKKPYLTPKENIESHLVYSFNGVVDTVVIDGKIVLNDGKMVTIDEEKVYELAEEAYLELTK.

H57 and H59 together coordinate Zn(2+). The substrate site is built by E86 and H178. Zn(2+) is bound at residue H205. Substrate is bound by residues E208 and D294. D294 lines the Zn(2+) pocket.

This sequence belongs to the metallo-dependent hydrolases superfamily. MTA/SAH deaminase family. In terms of assembly, homotetramer. Requires Zn(2+) as cofactor.

It carries out the reaction 5'-deoxyadenosine + H2O + H(+) = 5'-deoxyinosine + NH4(+). The enzyme catalyses S-adenosyl-L-homocysteine + H2O + H(+) = S-inosyl-L-homocysteine + NH4(+). It catalyses the reaction S-methyl-5'-thioadenosine + H2O + H(+) = S-methyl-5'-thioinosine + NH4(+). The catalysed reaction is adenosine + H2O + H(+) = inosine + NH4(+). Its pathway is amino-acid biosynthesis; S-adenosyl-L-methionine biosynthesis. Its function is as follows. Catalyzes the deamination of three SAM-derived enzymatic products, namely 5'-deoxyadenosine, S-adenosyl-L-homocysteine, and 5'-methylthioadenosine, to produce the inosine analogs. Can also deaminate adenosine. The preferred substrate for this enzyme is 5'-deoxyadenosine, but all these substrates are efficiently deaminated. Likely functions in a S-adenosyl-L-methionine (SAM) recycling pathway from S-adenosyl-L-homocysteine (SAH) produced from SAM-dependent methylation reactions. May also be involved in the recycling of 5'-deoxyadenosine, whereupon the 5'-deoxyribose moiety of 5'-deoxyinosine is further metabolized to deoxyhexoses used for the biosynthesis of aromatic amino acids in methanogens. In Methanococcus maripaludis (strain C7 / ATCC BAA-1331), this protein is 5'-deoxyadenosine deaminase.